Here is a 473-residue protein sequence, read N- to C-terminus: JmjC domain-containing protein 4 (473 aa).

Positions 140–433 constitute a JmjC domain; the sequence is PTDGLLTDFS…DFDHPYLDRN (294 aa). The segment at 452–473 is disordered; the sequence is TNKKNEKRPAEDDSPSQKKTCQ.

The protein resides in the nucleus. Functionally, has a role in meiosis. In Schizosaccharomyces pombe (strain 972 / ATCC 24843) (Fission yeast), this protein is JmjC domain-containing protein 4 (jmj4).